A 201-amino-acid polypeptide reads, in one-letter code: Small ribosomal subunit protein uS4c (201 aa).

Positions 20-44 are disordered; that stretch reads GLTSKRPRAGSDLRNQSRSGKKSQY. Residues 89–152 form the S4 RNA-binding domain; that stretch reads MRLDNILFRL…NSRTLVQNLL (64 aa).

The protein belongs to the universal ribosomal protein uS4 family. Part of the 30S ribosomal subunit. Contacts protein S5. The interaction surface between S4 and S5 is involved in control of translational fidelity.

It localises to the plastid. It is found in the chloroplast. Functionally, one of the primary rRNA binding proteins, it binds directly to 16S rRNA where it nucleates assembly of the body of the 30S subunit. With S5 and S12 plays an important role in translational accuracy. This chain is Small ribosomal subunit protein uS4c (rps4), found in Arabis hirsuta (Hairy rock-cress).